The sequence spans 165 residues: Protein FAM219A (165 aa).

M1 bears the N-acetylmethionine mark. Positions 1–114 (MMEEIDRFQV…SRYSSSGYSS (114 aa)) are disordered. The span at 32 to 44 (CDAREEKQRELAR) shows a compositional bias: basic and acidic residues. The segment covering 49-63 (KNGSMGSPVNQQPKK) has biased composition (polar residues). Phosphoserine occurs at positions 55 and 85. T96 is modified (phosphothreonine). A phosphoserine mark is found at S98 and S105. Positions 105–114 (SRYSSSGYSS) are enriched in low complexity.

Belongs to the FAM219 family.

The protein is Protein FAM219A (FAM219A) of Macaca fascicularis (Crab-eating macaque).